A 469-amino-acid chain; its full sequence is 3-isopropylmalate dehydratase large subunit (469 aa).

[4Fe-4S] cluster-binding residues include cysteine 346, cysteine 406, and cysteine 409.

It belongs to the aconitase/IPM isomerase family. LeuC type 1 subfamily. Heterodimer of LeuC and LeuD. The cofactor is [4Fe-4S] cluster.

It catalyses the reaction (2R,3S)-3-isopropylmalate = (2S)-2-isopropylmalate. It participates in amino-acid biosynthesis; L-leucine biosynthesis; L-leucine from 3-methyl-2-oxobutanoate: step 2/4. Its function is as follows. Catalyzes the isomerization between 2-isopropylmalate and 3-isopropylmalate, via the formation of 2-isopropylmaleate. This is 3-isopropylmalate dehydratase large subunit from Lysinibacillus sphaericus (strain C3-41).